The following is a 155-amino-acid chain: Myosin light chain alkali (155 aa).

2 EF-hand domains span residues 7–41 (REVENVEFVFEVMGSPGEGIDAVDLGDALRALNLN) and 80–115 (GCYEDFIECLKLYDKEENGTMMLAELQHALLALGES).

In terms of assembly, myosin is a hexamer of 2 heavy chains and 4 light chains.

The chain is Myosin light chain alkali (Mlc1) from Drosophila simulans (Fruit fly).